We begin with the raw amino-acid sequence, 863 residues long: MENIFSKDSDIELVDIENSIKSSYLDYSMSVIIGRALPDARDGLKPVHRRILYAMQNDEAKSRTDFVKSARIVGAVIGRYHPHGDTAVYDALVRMAQDFSMRYPSITGQGNFGSIDGDSAAAMRYTEAKMSKLSHELLKDIDKDTVDFVPNYDGSESEPDVLPSRVPNLLLNGSSGIAVGMATNIPPHSLNELIDGLLYLLDNKDASLEEIMQFIKGPDFPTGGIIYGKKGIIEAYRTGRGRVKVRAKTHIEKKTNKDVIVIDELPYQTNKARLIEQIAELVKERQIEGISEVRDESNKEGIRVVIELKREAMSEIVLNNLFKSTTMESTFGVIMLAIHNKEPKIFSLLELLNLFLTHRKTVIIRRTIFELQKARARAHILEGLKIALDNIDEVIALIKNSSDNNTARDSLVAKFGLSELQANAILDMKLGRLTGLEREKIENELAELMKEIARLEEILKSETLLENLIRDELKEIRSKFDVPRITQIEDDYDDIDIEDLIPNENMVVTITHRGYIKRVPSKQYEKQKRGGKGKLAVTTYDDDFIESFFTANTHDTLMFVTDRGQLYWLKVYKIPEGSRTAKGKAVVNLINLQAEEKIMAIIPTTDFDESKSLCFFTKNGIVKRTNLSEYQNIRSVGVRAINLDENDELVTAIIVQRDEDEIFATGGEENLENQEIENLDDENLENEESVSTQGKMLFAVTKKGMCIKFPLAKVREIGRVSRGVTAIKFKEKNDELVGAVVIENDEQEILSISAKGIGKRTNAGEYRLQSRGGKGVICMKLTEKTKDLISVVIVDETMDLMALTSSGKMIRVDMQSIRKAGRNTSGVIVVNVENDEVVSIAKCPKEENDEDELSDENFGLDLQ.

A Topo IIA-type catalytic domain is found at 37-500; that stretch reads LPDARDGLKP…DYDDIDIEDL (464 aa). The active-site O-(5'-phospho-DNA)-tyrosine intermediate is Tyr-125. The GyrA-box signature appears at 527 to 533; sequence QKRGGKG.

Belongs to the type II topoisomerase GyrA/ParC subunit family. As to quaternary structure, heterotetramer, composed of two GyrA and two GyrB chains. In the heterotetramer, GyrA contains the active site tyrosine that forms a transient covalent intermediate with DNA, while GyrB binds cofactors and catalyzes ATP hydrolysis.

Its subcellular location is the cytoplasm. It catalyses the reaction ATP-dependent breakage, passage and rejoining of double-stranded DNA.. In terms of biological role, a type II topoisomerase that negatively supercoils closed circular double-stranded (ds) DNA in an ATP-dependent manner to modulate DNA topology and maintain chromosomes in an underwound state. Negative supercoiling favors strand separation, and DNA replication, transcription, recombination and repair, all of which involve strand separation. Also able to catalyze the interconversion of other topological isomers of dsDNA rings, including catenanes and knotted rings. Type II topoisomerases break and join 2 DNA strands simultaneously in an ATP-dependent manner. In Campylobacter jejuni subsp. jejuni serotype O:2 (strain ATCC 700819 / NCTC 11168), this protein is DNA gyrase subunit A.